Here is a 212-residue protein sequence, read N- to C-terminus: Prolactin (212 aa).

The N-terminal stretch at 1–24 is a signal peptide; that stretch reads MAQRKTNGSKLFMMVLYMVAACSA. 2 disulfides stabilise this stretch: C70/C185 and C202/C212.

It belongs to the somatotropin/prolactin family. In terms of tissue distribution, pituitary gland.

The protein localises to the secreted. This chain is Prolactin (prl), found in Dicentrarchus labrax (European seabass).